Reading from the N-terminus, the 737-residue chain is Protein penguin (737 aa).

The interval methionine 1–lysine 128 is disordered. Basic and acidic residues-rich tracts occupy residues lysine 76–leucine 89 and glutamate 107–aspartate 122. Residues glutamate 139–isoleucine 490 enclose the PUM-HD domain. 5 Pumilio repeats span residues asparagine 167 to glutamate 202, lysine 203 to aspartate 238, serine 239 to glutamine 274, asparagine 388 to aspartate 425, and histidine 426 to arginine 462. The interval valine 577 to serine 638 is disordered. Over residues serine 580–glutamate 600 the composition is skewed to acidic residues. Over residues lysine 601–valine 615 the composition is skewed to basic and acidic residues. Over residues lysine 616–lysine 626 the composition is skewed to basic residues.

This Drosophila melanogaster (Fruit fly) protein is Protein penguin.